Consider the following 300-residue polypeptide: Ribosomal RNA small subunit methyltransferase H (300 aa).

S-adenosyl-L-methionine is bound by residues 46-48, Asp65, Phe92, Asp107, and Gln114; that span reads GGH.

The protein belongs to the methyltransferase superfamily. RsmH family.

The protein localises to the cytoplasm. It catalyses the reaction cytidine(1402) in 16S rRNA + S-adenosyl-L-methionine = N(4)-methylcytidine(1402) in 16S rRNA + S-adenosyl-L-homocysteine + H(+). Functionally, specifically methylates the N4 position of cytidine in position 1402 (C1402) of 16S rRNA. This Prochlorococcus marinus (strain MIT 9515) protein is Ribosomal RNA small subunit methyltransferase H.